Here is a 215-residue protein sequence, read N- to C-terminus: MGKVYDWFEERLEIQAIADDITSKYVPPHVNIFYCLGGITLTCFLVQVATGFAMTFYYRPTVTEAFASVQYIMVEVNFGWLIRSIHRWSASMMVLMMILHVFRVYLTGGFKKPRELTWVTGVILAVLTVSFGVTGYSLPWDQIGYWAVKIVTGVPEAIPVIGSPLVELLRGSFSVGQSTLTRFYSLHTFILPFLTAVFMLMHFLMIRKQGISGPL.

A helical membrane pass occupies residues 32 to 52; it reads IFYCLGGITLTCFLVQVATGF. Cys-35 provides a ligand contact to heme c. Residues His-86 and His-100 each coordinate heme b. 3 helical membrane passes run 90 to 110, 116 to 136, and 186 to 206; these read ASMM…TGGF, LTWV…VTGY, and LHTF…FLMI. 2 residues coordinate heme b: His-187 and His-202.

It belongs to the cytochrome b family. PetB subfamily. As to quaternary structure, the 4 large subunits of the cytochrome b6-f complex are cytochrome b6, subunit IV (17 kDa polypeptide, PetD), cytochrome f and the Rieske protein, while the 4 small subunits are PetG, PetL, PetM and PetN. The complex functions as a dimer. Heme b serves as cofactor. It depends on heme c as a cofactor.

It localises to the plastid. Its subcellular location is the chloroplast thylakoid membrane. In terms of biological role, component of the cytochrome b6-f complex, which mediates electron transfer between photosystem II (PSII) and photosystem I (PSI), cyclic electron flow around PSI, and state transitions. The sequence is that of Cytochrome b6 from Welwitschia mirabilis (Tree tumbo).